Consider the following 225-residue polypeptide: Holliday junction branch migration complex subunit RuvA (225 aa).

The interval 1-71 is domain I; the sequence is MISWISGELV…EDSDLLFGFS (71 aa). The domain II stretch occupies residues 72-150; sequence SKDQKNFFIE…NELKIQEEKS (79 aa). Residues 151–161 form a flexible linker region; that stretch reads KDEFHIKDNKI. The domain III stretch occupies residues 161–225; sequence INKIVSDIEL…LDNDSSNIVR (65 aa).

This sequence belongs to the RuvA family. Homotetramer. Forms an RuvA(8)-RuvB(12)-Holliday junction (HJ) complex. HJ DNA is sandwiched between 2 RuvA tetramers; dsDNA enters through RuvA and exits via RuvB. An RuvB hexamer assembles on each DNA strand where it exits the tetramer. Each RuvB hexamer is contacted by two RuvA subunits (via domain III) on 2 adjacent RuvB subunits; this complex drives branch migration. In the full resolvosome a probable DNA-RuvA(4)-RuvB(12)-RuvC(2) complex forms which resolves the HJ.

The protein localises to the cytoplasm. In terms of biological role, the RuvA-RuvB-RuvC complex processes Holliday junction (HJ) DNA during genetic recombination and DNA repair, while the RuvA-RuvB complex plays an important role in the rescue of blocked DNA replication forks via replication fork reversal (RFR). RuvA specifically binds to HJ cruciform DNA, conferring on it an open structure. The RuvB hexamer acts as an ATP-dependent pump, pulling dsDNA into and through the RuvAB complex. HJ branch migration allows RuvC to scan DNA until it finds its consensus sequence, where it cleaves and resolves the cruciform DNA. This Prochlorococcus marinus (strain MIT 9312) protein is Holliday junction branch migration complex subunit RuvA.